Consider the following 210-residue polypeptide: MILKSQANKLKFTKQAKVFHYGSISLITEPCRSAHMKATEEAKEAGALLSYDPNLREPLWPSPEEARTQIMSIWDKADIIKVSDVELEFLTRNKTIDDETAMSLWHPNLKLLLVTLGEKGCRYYTKDFHGSVETFHVDAVDTTGAGDSFVGALLNQIVDDQSVLEEEERLRKVLRIANACGAITTTKKGAIPALPTDCEALSFLKRQVEQ.

Belongs to the carbohydrate kinase PfkB family.

It carries out the reaction D-fructose + ATP = D-fructose 6-phosphate + ADP + H(+). It participates in glycan biosynthesis; starch biosynthesis. Functionally, may play an important role in maintaining the flux of carbon towards starch formation. In Arabidopsis thaliana (Mouse-ear cress), this protein is Putative fructokinase-8.